We begin with the raw amino-acid sequence, 337 residues long: Holliday junction branch migration complex subunit RuvB (337 aa).

The segment at 1 to 179 (MTHQVSVLHQ…FSFSGRVSYY (179 aa)) is large ATPase domain (RuvB-L). Residues leucine 18, arginine 19, glycine 60, lysine 63, threonine 64, serine 65, 126–128 (EDY), arginine 169, tyrosine 179, and arginine 216 each bind ATP. Threonine 64 is a Mg(2+) binding site. Positions 180-250 (SDEDLATILK…VAEKALSMLL (71 aa)) are small ATPAse domain (RuvB-S). Residues 253–337 (DWGLNEIDIK…DNLQILGEEK (85 aa)) are head domain (RuvB-H). The DNA site is built by lysine 308 and arginine 313.

The protein belongs to the RuvB family. In terms of assembly, homohexamer. Forms an RuvA(8)-RuvB(12)-Holliday junction (HJ) complex. HJ DNA is sandwiched between 2 RuvA tetramers; dsDNA enters through RuvA and exits via RuvB. An RuvB hexamer assembles on each DNA strand where it exits the tetramer. Each RuvB hexamer is contacted by two RuvA subunits (via domain III) on 2 adjacent RuvB subunits; this complex drives branch migration. In the full resolvosome a probable DNA-RuvA(4)-RuvB(12)-RuvC(2) complex forms which resolves the HJ.

Its subcellular location is the cytoplasm. It catalyses the reaction ATP + H2O = ADP + phosphate + H(+). In terms of biological role, the RuvA-RuvB-RuvC complex processes Holliday junction (HJ) DNA during genetic recombination and DNA repair, while the RuvA-RuvB complex plays an important role in the rescue of blocked DNA replication forks via replication fork reversal (RFR). RuvA specifically binds to HJ cruciform DNA, conferring on it an open structure. The RuvB hexamer acts as an ATP-dependent pump, pulling dsDNA into and through the RuvAB complex. RuvB forms 2 homohexamers on either side of HJ DNA bound by 1 or 2 RuvA tetramers; 4 subunits per hexamer contact DNA at a time. Coordinated motions by a converter formed by DNA-disengaged RuvB subunits stimulates ATP hydrolysis and nucleotide exchange. Immobilization of the converter enables RuvB to convert the ATP-contained energy into a lever motion, pulling 2 nucleotides of DNA out of the RuvA tetramer per ATP hydrolyzed, thus driving DNA branch migration. The RuvB motors rotate together with the DNA substrate, which together with the progressing nucleotide cycle form the mechanistic basis for DNA recombination by continuous HJ branch migration. Branch migration allows RuvC to scan DNA until it finds its consensus sequence, where it cleaves and resolves cruciform DNA. The protein is Holliday junction branch migration complex subunit RuvB of Chlamydia felis (strain Fe/C-56) (Chlamydophila felis).